Reading from the N-terminus, the 329-residue chain is MVKTQRVVITPGEPAGIGPDLVVQLAQREWPVELVVCADATLLTDRAAMLGLPLTLRPYSPNSPAQPQTAGTLTLLPVALRESVTAGQLAVENGHYVVETLARACDGCLNGEFAALITGPVHKGVINDAGIPFTGHTEFFEERSQAKKVVMMLATEELRVALATTHLPLRDIADAITPALLHEVIAILHHDLRTKFGIAEPRILVCGLNPHAGEGGHMGTEEIDTIIPVLDELRVQGMKLKGPLPADTLFQPKYLDNADAVLAMYHDQGLPVLKYQGFGRGVNITLGLPFIRTSVDHGTALELAGRGKADVGSFITALNLAIKMIVNTQ.

Histidine 136 and threonine 137 together coordinate substrate. A divalent metal cation contacts are provided by histidine 166, histidine 211, and histidine 266. Substrate-binding residues include lysine 274, asparagine 283, and arginine 292.

Belongs to the PdxA family. As to quaternary structure, homodimer. Requires Zn(2+) as cofactor. It depends on Mg(2+) as a cofactor. The cofactor is Co(2+).

It localises to the cytoplasm. The catalysed reaction is 4-(phosphooxy)-L-threonine + NAD(+) = 3-amino-2-oxopropyl phosphate + CO2 + NADH. It functions in the pathway cofactor biosynthesis; pyridoxine 5'-phosphate biosynthesis; pyridoxine 5'-phosphate from D-erythrose 4-phosphate: step 4/5. Catalyzes the NAD(P)-dependent oxidation of 4-(phosphooxy)-L-threonine (HTP) into 2-amino-3-oxo-4-(phosphooxy)butyric acid which spontaneously decarboxylates to form 3-amino-2-oxopropyl phosphate (AHAP). In Escherichia fergusonii (strain ATCC 35469 / DSM 13698 / CCUG 18766 / IAM 14443 / JCM 21226 / LMG 7866 / NBRC 102419 / NCTC 12128 / CDC 0568-73), this protein is 4-hydroxythreonine-4-phosphate dehydrogenase.